Consider the following 859-residue polypeptide: Toll-like receptor 5 (859 aa).

The first 26 residues, 1–26 (MACQLDLLIGVIFMASPVLVISPCSS), serve as a signal peptide directing secretion. The Extracellular portion of the chain corresponds to 27–641 (DGRIAFFRGC…EEEAMRSLKF (615 aa)). N-linked (GlcNAc...) asparagine glycans are attached at residues Asn-37, Asn-46, and Asn-84. LRR repeat units follow at residues 45-69 (LNTT…SFPL), 72-94 (RLQL…AFRN), 96-118 (PNLR…AFQG), 121-144 (HLLE…YFRN), 147-167 (SLAR…HSSF), 172-193 (SLSD…ELEP), 198-212 (TLSF…LFSR), 215-230 (VGWE…VRLE), and 235-236 (SE). Asn-246 carries N-linked (GlcNAc...) asparagine glycosylation. LRR repeat units follow at residues 261–285 (LKHH…TFAS), 290–302 (SVLQ…GFIF), 314–335 (DLKM…AFYG), 338–356 (SLQV…YNSN), 386–402 (TLQT…AIGF), and 413–432 (GNKL…LELS). A glycan (N-linked (GlcNAc...) asparagine) is linked at Asn-343. N-linked (GlcNAc...) asparagine glycosylation occurs at Asn-438. 5 LRR repeats span residues 450–471 (QLQF…HTPS), 475–496 (SLEQ…GLCW), 504–525 (RLQI…IFND), 528–547 (ALRM…PGSL), and 550–568 (NLEI…DPAL). Positions 580 to 632 (NEFVCNCELSTFISWLNQTNVTLFGSPADVYCMYPNSLLGGSLYNISTEDCDE) constitute an LRRCT domain. Disulfide bonds link Cys-584-Cys-611 and Cys-586-Cys-630. N-linked (GlcNAc...) asparagine glycans are attached at residues Asn-596, Asn-599, and Asn-624. Residues 642 to 662 (SLFILCTVTLTLFLVITLVVI) traverse the membrane as a helical segment. Residues 663–859 (KFRGICFLCY…IQLRTIATIS (197 aa)) lie on the Cytoplasmic side of the membrane. Positions 692–837 (YRYDAYFCFS…WFLDKLSGCI (146 aa)) constitute a TIR domain. Tyr-799 is modified (phosphotyrosine).

This sequence belongs to the Toll-like receptor family. Homodimer. Interacts with MYD88 (via TIR domain). Interacts with TICAM1 (via TIR domain). Interacts with UNC93B1; this interaction is essential for proper TLR5 localization to the plasma membrane. In terms of processing, phosphorylated at Tyr-799 upon flagellin binding; required for signaling. In terms of tissue distribution, highly expressed in liver. Detected in lung and at very low levels in most other tissues.

It is found in the membrane. Functionally, pattern recognition receptor (PRR) located on the cell surface that participates in the activation of innate immunity and inflammatory response. Recognizes small molecular motifs named pathogen-associated molecular pattern (PAMPs) expressed by pathogens and microbe-associated molecular patterns (MAMPs) usually expressed by resident microbiota. Upon ligand binding such as bacterial flagellins, recruits intracellular adapter proteins MYD88 and TRIF leading to NF-kappa-B activation, cytokine secretion and induction of the inflammatory response. Plays thereby an important role in the relationship between the intestinal epithelium and enteric microbes and contributes to the gut microbiota composition throughout life. This is Toll-like receptor 5 (Tlr5) from Mus musculus (Mouse).